Here is a 110-residue protein sequence, read N- to C-terminus: Hydrogenase maturation factor HypA (110 aa).

H2 is a Ni(2+) binding site. Positions 70, 73, 86, and 89 each coordinate Zn(2+).

It belongs to the HypA/HybF family.

In terms of biological role, involved in the maturation of [NiFe] hydrogenases. Required for nickel insertion into the metal center of the hydrogenase. The polypeptide is Hydrogenase maturation factor HypA (Geobacter sulfurreducens (strain ATCC 51573 / DSM 12127 / PCA)).